The following is a 276-amino-acid chain: Undecaprenyl-diphosphatase (276 aa).

A run of 6 helical transmembrane segments spans residues 43–63 (RAMA…VWEF), 85–105 (GNLL…ADLI), 109–129 (LFNP…MLWA), 183–203 (AATE…AVYS), 214–234 (ADLP…MIAV), and 249–269 (FAWY…FGWV).

This sequence belongs to the UppP family.

It is found in the cell inner membrane. It catalyses the reaction di-trans,octa-cis-undecaprenyl diphosphate + H2O = di-trans,octa-cis-undecaprenyl phosphate + phosphate + H(+). Catalyzes the dephosphorylation of undecaprenyl diphosphate (UPP). Confers resistance to bacitracin. The polypeptide is Undecaprenyl-diphosphatase (Pseudomonas putida (strain GB-1)).